Reading from the N-terminus, the 357-residue chain is Serine proteinase inhibitor 1 (357 aa).

This sequence belongs to the serpin family. Poxviruses subfamily.

It localises to the host cytoplasm. This viral protein may be involved in the regulation of the complement cascade. Involved in red pock formation. This Oryctolagus cuniculus (Rabbit) protein is Serine proteinase inhibitor 1 (SPI-1).